The chain runs to 134 residues: uncharacterized protein (134 aa).

Helical transmembrane passes span 16–36 (IFSF…NTKL) and 43–63 (IAYF…IHGT).

This sequence belongs to the plectrovirus ORF5 family.

The protein resides in the host membrane. This is an uncharacterized protein from Spiroplasma citri (SpV1).